The chain runs to 949 residues: AP-1 complex subunit beta-1 (949 aa).

At K318 the chain carries N6-acetyllysine. The residue at position 574 (Y574) is a 3'-nitrotyrosine. A disordered region spans residues 592 to 623 (SLPPRTASSESTESPEAAPAGAPASDQPDVIP). Low complexity predominate over residues 594-616 (PPRTASSESTESPEAAPAGAPAS).

The protein belongs to the adaptor complexes large subunit family. Adaptor protein complex 1 (AP-1) is a heterotetramer composed of two large adaptins (gamma-type subunit AP1G1 and beta-type subunit AP1B1), a medium adaptin (mu-type subunit AP1M1 or AP1M2) and a small adaptin (sigma-type subunit AP1S1 or AP1S2 or AP1S3). In terms of processing, the N-terminus is blocked.

The protein resides in the golgi apparatus. It is found in the cytoplasmic vesicle. It localises to the clathrin-coated vesicle membrane. Functionally, subunit of clathrin-associated adaptor protein complex 1 that plays a role in protein sorting in the late-Golgi/trans-Golgi network (TGN) and/or endosomes. The AP complexes mediate both the recruitment of clathrin to membranes and the recognition of sorting signals within the cytosolic tails of transmembrane cargo molecules. The chain is AP-1 complex subunit beta-1 (Ap1b1) from Rattus norvegicus (Rat).